We begin with the raw amino-acid sequence, 496 residues long: UDP-glycosyltransferase 73C4 (496 aa).

UDP-alpha-D-glucose contacts are provided by residues serine 297, 357 to 359 (SPQ), 374 to 382 (HCGWNSTLE), and 396 to 399 (FGDQ). The segment at 450-475 (SDDAKERRRRVKELGESAHKAVEEGG) is disordered. Residues 451 to 472 (DDAKERRRRVKELGESAHKAVE) show a composition bias toward basic and acidic residues.

It belongs to the UDP-glycosyltransferase family.

This chain is UDP-glycosyltransferase 73C4 (UGT73C4), found in Arabidopsis thaliana (Mouse-ear cress).